The primary structure comprises 1705 residues: Receptor-type tyrosine-protein phosphatase V (1705 aa).

Residues 1-18 (MRPLILLAALLWLQDSLA) form the signal peptide. Residues 19-1077 (QEDVCSSLDG…QASISLVAMP (1059 aa)) are Extracellular-facing. The tract at residues 24 to 44 (SSLDGSPDRQGGGPPLSVSVT) is disordered. Fibronectin type-III domains are found at residues 37-129 (PPLS…TAPT), 130-222 (VVRG…VPPD), 218-305 (PVPP…EWTY), 306-388 (PSYP…SIWL), 393-454 (ARPM…HYRV), 475-569 (PPQS…APPT), 565-654 (PAPP…TGWT), 655-749 (PPSA…TPNE), 744-831 (PLTP…VLSV), and 832-926 (EPGP…SAEV). N-linked (GlcNAc...) asparagine glycosylation is found at Asn74, Asn89, Asn117, Asn174, Asn239, Asn259, Asn299, Asn345, Asn431, Asn551, Asn570, Asn620, Asn649, Asn663, and Asn737. 4 N-linked (GlcNAc...) asparagine glycosylation sites follow: Asn851, Asn882, Asn970, and Asn982. The helical transmembrane segment at 1078-1100 (LTVMMGTVVGCIIIVCAVLCLLC) threads the bilayer. Topologically, residues 1101–1705 (RRGLKGPRSE…LRNRLPRARK (605 aa)) are cytoplasmic. Tyrosine-protein phosphatase domains follow at residues 1150–1409 (FFQE…LLNK) and 1427–1695 (NFAQ…LNSA). Substrate is bound by residues Asp1316, 1350–1356 (CSAGVGR), and Gln1394. Cys1350 serves as the catalytic Phosphocysteine intermediate.

This sequence belongs to the protein-tyrosine phosphatase family. Receptor class 3 subfamily.

The protein resides in the membrane. It catalyses the reaction O-phospho-L-tyrosyl-[protein] + H2O = L-tyrosyl-[protein] + phosphate. Functionally, protein tyrosine phosphatase that acts as a regulator of energy metabolism by mediating dephosphorylation of insulin receptor (Insr). Prevents decarboxylation of osteocalcin (Bglap and Bglap2) via an indirect mechanism: dephosphorylation of insulin receptor prevents insulin signaling-dependent decarboxylation of osteocalcin, preventing the hormone activity of osteocalcin. May play a role in the maintenance of pluripotency. This chain is Receptor-type tyrosine-protein phosphatase V (Ptprv), found in Mus musculus (Mouse).